Here is a 544-residue protein sequence, read N- to C-terminus: Lysophosphatidylcholine acyltransferase 2 (544 aa).

The Cytoplasmic portion of the chain corresponds to 1 to 57 (MSRCAQAAEVAATVPGAGVGNVGLRPPMVPRQASFFPPPVPNPFVQQTQIGSARRVQ). A helical; Signal-anchor for type II membrane protein transmembrane segment spans residues 58–78 (IVLLGIILLPIRVLLVALILL). Topologically, residues 79–544 (LAWPFAAIST…EESTSDKKDD (466 aa)) are lumenal. The HXXXXD motif motif lies at 146-151 (HSTFFD). Positions 220–223 (EGTC) match the EGTC motif motif. EF-hand domains are found at residues 391–426 (PVSDVLRQLFALFDRNHDGSIDFREYVIGLAVLCNP) and 428–463 (NTEEIIQVAFKLFDVDEDGYITEEEFSTILQASLGV). Residues Asp-404, Asn-406, Asp-408, Ser-410, Glu-415, Asp-441, Asp-443, Asp-445, Tyr-447, and Glu-452 each contribute to the Ca(2+) site. Residues 518–529 (VQTTPSTASNKV) show a composition bias toward polar residues. The segment at 518–544 (VQTTPSTASNKVSPEKHEESTSDKKDD) is disordered. Positions 530–544 (SPEKHEESTSDKKDD) are enriched in basic and acidic residues.

Belongs to the 1-acyl-sn-glycerol-3-phosphate acyltransferase family.

The protein localises to the endoplasmic reticulum membrane. The protein resides in the golgi apparatus membrane. It localises to the cell membrane. Its subcellular location is the lipid droplet. It catalyses the reaction a 1-acyl-sn-glycero-3-phosphocholine + an acyl-CoA = a 1,2-diacyl-sn-glycero-3-phosphocholine + CoA. The catalysed reaction is a 1-O-alkyl-sn-glycero-3-phosphocholine + acetyl-CoA = a 1-O-alkyl-2-acetyl-sn-glycero-3-phosphocholine + CoA. It carries out the reaction a 1-acyl-sn-glycero-3-phosphate + an acyl-CoA = a 1,2-diacyl-sn-glycero-3-phosphate + CoA. The enzyme catalyses a 1-O-(1Z-alkenyl)-sn-glycero-3-phosphocholine + an acyl-CoA = a 1-O-(1Z-alkenyl)-2-acyl-sn-glycero-3-phosphocholine + CoA. It catalyses the reaction 1-hexadecanoyl-sn-glycero-3-phosphate + (9Z)-octadecenoyl-CoA = 1-hexadecanoyl-2-(9Z-octadecenoyl)-sn-glycero-3-phosphate + CoA. The catalysed reaction is 1-(9Z-octadecenoyl)-sn-glycero-3-phosphate + (9Z)-octadecenoyl-CoA = 1,2-di-(9Z-octadecenoyl)-sn-glycero-3-phosphate + CoA. It carries out the reaction 1-(9Z-octadecenoyl)-sn-glycero-3-phosphate + hexadecanoyl-CoA = 1-(9Z)-octadecenoyl-2-hexadecanoyl-sn-glycero-3-phosphate + CoA. The enzyme catalyses 1-heptadecanoyl-sn-glycero-3-phosphate + (9Z)-octadecenoyl-CoA = 1-heptadecanoyl-2-(9Z)-octadecenoyl-sn-glycero-3-phosphate + CoA. It catalyses the reaction 1-octadecanoyl-sn-glycero-3-phosphate + (9Z)-octadecenoyl-CoA = 1-octadecanoyl-2-(9Z-octadecenoyl)-sn-glycero-3-phosphate + CoA. The catalysed reaction is heptadecanoyl-CoA + 1-(9Z-octadecenoyl)-sn-glycero-3-phosphate = 1-(9Z)-octadecenoyl-2-heptadecanoyl-sn-glycero-3-phosphate + CoA. It carries out the reaction 1-(9Z-octadecenoyl)-sn-glycero-3-phosphate + (9Z,12Z)-octadecadienoyl-CoA = 1-(9Z)-octadecenoyl-2-(9Z,12Z)-octadecadienoyl-sn-glycero-3-phosphate + CoA. The enzyme catalyses 1-(9Z-octadecenoyl)-sn-glycero-3-phosphate + tetradecanoyl-CoA = 1-(9Z)-octadecenoyl-2-tetradecanoyl-sn-glycero-3-phosphate + CoA. It catalyses the reaction pentadecanoyl-CoA + 1-(9Z-octadecenoyl)-sn-glycero-3-phosphate = 1-(9Z)-octadecenoyl-2-pentadecanoyl-sn-glycero-3-phosphate + CoA. The catalysed reaction is nonadecanoyl-CoA + 1-(9Z-octadecenoyl)-sn-glycero-3-phosphate = 1-(9Z)-octadecenoyl-2-nonadecanoyl-sn-glycero-3-phosphate + CoA. It carries out the reaction 1-hexadecanoyl-sn-glycero-3-phosphocholine + (9Z)-octadecenoyl-CoA = 1-hexadecanoyl-2-(9Z-octadecenoyl)-sn-glycero-3-phosphocholine + CoA. The enzyme catalyses 1-O-hexadecyl-sn-glycero-3-phosphocholine + acetyl-CoA = 1-O-hexadecyl-2-acetyl-sn-glycero-3-phosphocholine + CoA. It catalyses the reaction 1-O-octadecyl-sn-glycero-3-phosphocholine + acetyl-CoA = 1-O-octadecyl-2-acetyl-sn-glycero-3-phosphocholine + CoA. The catalysed reaction is 1-hexadecanoyl-sn-glycero-3-phosphocholine + acetyl-CoA = 1-hexadecanoyl-2-acetyl-sn-glycero-3-phosphocholine + CoA. It carries out the reaction 1-octadecanoyl-sn-glycero-3-phosphocholine + acetyl-CoA = 1-octadecanoyl-2-acetyl-sn-glycero-3-phosphocholine + CoA. The enzyme catalyses a 1-O-(1Z-alkenyl)-sn-glycero-3-phosphocholine + acetyl-CoA = 1-O-(1Z)-alkenyl-2-acetyl-sn-glycero-3-phosphocholine + CoA. It catalyses the reaction 1-O-octadecyl-sn-glycero-3-phosphocholine + (5Z,8Z,11Z,14Z)-eicosatetraenoyl-CoA = 1-O-octadecyl-2-(5Z,8Z,11Z,14Z)-eicosatetraenoyl-sn-glycero-3-phosphocholine + CoA. The protein operates within lipid metabolism; phospholipid metabolism. Exhibits both acyltransferase and acetyltransferase activities. Catalyzes the conversion of lysophosphatidylcholine (1-acyl-sn-glycero-3-phosphocholine or LPC) into phosphatidylcholine (1,2-diacyl-sn-glycero-3-phosphocholine or PC). Catalyzes the conversion 1-acyl-sn-glycerol-3-phosphate (lysophosphatidic acid or LPA) into 1,2-diacyl-sn-glycerol-3-phosphate (phosphatidic acid or PA) by incorporating an acyl moiety at the sn-2 position of the glycerol backbone. Involved in platelet-activating factor (PAF) biosynthesis by catalyzing the conversion of the PAF precursor, 1-O-alkyl-sn-glycero-3-phosphocholine (lyso-PAF) into 1-O-alkyl-2-acetyl-sn-glycero-3-phosphocholine (PAF). Also converts lyso-PAF to 1-O-alkyl-2-acyl-sn-glycero-3-phosphocholine (PC), a major component of cell membranes and a PAF precursor. Under resting conditions, acyltransferase activity is preferred. Upon acute inflammatory stimulus, acetyltransferase activity is enhanced and PAF synthesis increases. Involved in the regulation of lipid droplet number and size. The polypeptide is Lysophosphatidylcholine acyltransferase 2 (LPCAT2) (Homo sapiens (Human)).